The chain runs to 452 residues: MTGRSCLTIVLAAGEGTRMRSSLPKVLHPVAGQTLLAHVLTAAPSGPGTSLAAVVGPGHEAVADEARHVRPDVMTFVQHERLGTAHAVLAAREAIARGADDLVIAFGDTPLISADTLARMRAPLQAGASLVVLGFHAADPTGYGRLIVDNGRLTAIREQADASADERSITLCNAGVMAFDGKTALQIIEKIGNANSKGEYYLTDAVSIVRESGLTAAVIETSEDEVRGINTKAQLAEAEQVMQARLRKEALDAGVTMVAPDTVFLAADTSFGKDVTIEPYVVIGPGVTIADGAVIHSFSHLVQASIGRNASVGPYARLRPGTSLGEGARVGNFVETKAAVLEAGAKVNHLTYVGDAHIGANANIGAGTITCNYDGFGKYRTEIGEGAFVGSNSSLVAPVKIGAGAYVGSGSVVTRNVPDDALAVGRGQQTVREGWARRFREMKLLAKKPKTG.

The segment at 1–232 is pyrophosphorylase; that stretch reads MTGRSCLTIV…EDEVRGINTK (232 aa). UDP-N-acetyl-alpha-D-glucosamine contacts are provided by residues 11–14, Lys-25, Gln-78, and 83–84; these read LAAG and GT. Asp-108 is a Mg(2+) binding site. Positions 144, 158, 173, and 230 each coordinate UDP-N-acetyl-alpha-D-glucosamine. A Mg(2+)-binding site is contributed by Asn-230. The segment at 233-253 is linker; the sequence is AQLAEAEQVMQARLRKEALDA. Positions 254–452 are N-acetyltransferase; sequence GVTMVAPDTV…KLLAKKPKTG (199 aa). Residues Arg-319 and Lys-337 each contribute to the UDP-N-acetyl-alpha-D-glucosamine site. His-349 functions as the Proton acceptor in the catalytic mechanism. 2 residues coordinate UDP-N-acetyl-alpha-D-glucosamine: Tyr-352 and Asn-363. Acetyl-CoA-binding positions include Ala-366, 372 to 373, Ser-391, Ser-409, and Arg-426; that span reads NY.

In the N-terminal section; belongs to the N-acetylglucosamine-1-phosphate uridyltransferase family. The protein in the C-terminal section; belongs to the transferase hexapeptide repeat family. In terms of assembly, homotrimer. The cofactor is Mg(2+).

Its subcellular location is the cytoplasm. It catalyses the reaction alpha-D-glucosamine 1-phosphate + acetyl-CoA = N-acetyl-alpha-D-glucosamine 1-phosphate + CoA + H(+). The enzyme catalyses N-acetyl-alpha-D-glucosamine 1-phosphate + UTP + H(+) = UDP-N-acetyl-alpha-D-glucosamine + diphosphate. It functions in the pathway nucleotide-sugar biosynthesis; UDP-N-acetyl-alpha-D-glucosamine biosynthesis; N-acetyl-alpha-D-glucosamine 1-phosphate from alpha-D-glucosamine 6-phosphate (route II): step 2/2. Its pathway is nucleotide-sugar biosynthesis; UDP-N-acetyl-alpha-D-glucosamine biosynthesis; UDP-N-acetyl-alpha-D-glucosamine from N-acetyl-alpha-D-glucosamine 1-phosphate: step 1/1. It participates in bacterial outer membrane biogenesis; LPS lipid A biosynthesis. Catalyzes the last two sequential reactions in the de novo biosynthetic pathway for UDP-N-acetylglucosamine (UDP-GlcNAc). The C-terminal domain catalyzes the transfer of acetyl group from acetyl coenzyme A to glucosamine-1-phosphate (GlcN-1-P) to produce N-acetylglucosamine-1-phosphate (GlcNAc-1-P), which is converted into UDP-GlcNAc by the transfer of uridine 5-monophosphate (from uridine 5-triphosphate), a reaction catalyzed by the N-terminal domain. The chain is Bifunctional protein GlmU from Nitrobacter hamburgensis (strain DSM 10229 / NCIMB 13809 / X14).